Consider the following 347-residue polypeptide: MVENIIELRDISKHYEELTVLDNFNLDIKKNEFLTLLGPSGCGKTTTLKIIAGFEYADDGKVLFEGKEINNLPPYERQVNTVFQKYALFPHMDVYENVAFGLKIKKTPKDVIDAKVKEVLKLVALEGFERRQVESLSGGQQQRIAIARALVNEPKVLLLDEPLGALDLKLRQEMQIELKRIQKKLGITFVFVTHDQEEALTMSDTIVVMYKGKIQQMGTPQDIYNEPKNSFVAKFIGESNIFDGIMIEDYKVNFCNRDFECVDKGFEKNENIEVVIRPEDIKMVKPEEGMLKGKVTSTVFKGVHYEIELNENGRLWILHNTKNAEVGTELGMDIYPEDIHIMRKENN.

The ABC transporter domain maps to Ile6–Ile236. Position 38–45 (Gly38–Thr45) interacts with ATP.

Belongs to the ABC transporter superfamily. Spermidine/putrescine importer (TC 3.A.1.11.1) family. In terms of assembly, the complex is composed of two ATP-binding proteins (PotA), two transmembrane proteins (PotB and PotC) and a solute-binding protein (PotD).

Its subcellular location is the cell membrane. The catalysed reaction is ATP + H2O + polyamine-[polyamine-binding protein]Side 1 = ADP + phosphate + polyamineSide 2 + [polyamine-binding protein]Side 1.. In terms of biological role, part of the ABC transporter complex PotABCD involved in spermidine/putrescine import. Responsible for energy coupling to the transport system. The protein is Spermidine/putrescine import ATP-binding protein PotA of Clostridioides difficile (strain 630) (Peptoclostridium difficile).